Consider the following 500-residue polypeptide: Cytochrome P450 2D16 (500 aa).

At S249 the chain carries Phosphoserine. C446 is a binding site for heme.

The protein belongs to the cytochrome P450 family. Heme is required as a cofactor. As to expression, expressed at high levels in the inner zone of the adrenal cortex.

Its subcellular location is the endoplasmic reticulum membrane. It is found in the microsome membrane. The enzyme catalyses an organic molecule + reduced [NADPH--hemoprotein reductase] + O2 = an alcohol + oxidized [NADPH--hemoprotein reductase] + H2O + H(+). Cytochromes P450 are a group of heme-thiolate monooxygenases. In liver microsomes, this enzyme is involved in an NADPH-dependent electron transport pathway. It oxidizes a variety of structurally unrelated compounds, including steroids, fatty acids, and xenobiotics. The protein is Cytochrome P450 2D16 (CYP2D16) of Cavia porcellus (Guinea pig).